A 221-amino-acid polypeptide reads, in one-letter code: MASTKPLSRFWEWGKNIVCVGRNYADHVKEMRSTVLSEPVLFLKPSTAYAPEGSPVLMPAYCRNLHHEVELGVLLGRRGEAVPEAAAMDYVAGYALCLDMTARDVQDECKKKGLPWTLAKSFTSSCPVSAFVPKEKIPDPHALRLWLKVNGELRQEGKTSSMIFSIPYIISYVSKIITLEEGDLILTGTPKGVGAVKENDEIEAGIDGVVSMRFKVERSKY.

The N-terminal 24 residues, methionine 1 to tyrosine 24, are a transit peptide targeting the mitochondrion. Serine 37 is subject to Phosphoserine. Residues glutamate 68, glutamate 70, and aspartate 99 each coordinate Mg(2+). Lysine 110 carries the N6-acetyllysine modification. Residue lysine 112 is modified to N6-succinyllysine.

Belongs to the FAH family. In terms of assembly, homodimer. Mg(2+) serves as cofactor. Mn(2+) is required as a cofactor.

Its subcellular location is the mitochondrion. The protein localises to the cytoplasm. The protein resides in the cytosol. It carries out the reaction oxaloacetate = enol-oxaloacetate. It catalyses the reaction oxaloacetate + H(+) = pyruvate + CO2. The enzyme catalyses a 3-acylpyruvate + H2O = a carboxylate + pyruvate + H(+). The catalysed reaction is acetylpyruvate + H2O = acetate + pyruvate + H(+). It carries out the reaction 3-fumarylpyruvate + H2O = fumarate + pyruvate + H(+). Oxaloacetate decarboxylation is competitively inhibited by oxalate. Its function is as follows. Tautomerase that converts enol-oxaloacetate, a strong inhibitor of succinate dehydrogenase, to the physiological keto form of oxaloacetate. It is thereby required to maximize aerobic respiration efficiency by preventing succinate dehydrogenase inhibition. Also acts as a weak oxaloacetate decarboxylase (ODx), catalyzing the decarboxylation of oxaloacetate (OAA) to pyruvate and CO(2), and as such is likely a regulatory enzyme in the TCA cycle. Also displays acylpyruvase activity, being able to hydrolyze acetylpyruvate and fumarylpyruvate in vitro. The protein is Oxaloacetate tautomerase FAHD1, mitochondrial of Rattus norvegicus (Rat).